We begin with the raw amino-acid sequence, 110 residues long: RNA silencing suppressor (110 aa).

Positions 50–53 (RRRR) are basic. Residues 60 to 81 (CERCYRVYPPLPFSKKCDNRTC) form a C4-type zinc finger.

It belongs to the carlaviruses nucleic acid-binding protein family.

Suppressor of viral-induced RNA silencing. The potential mechanism of action is based on sequestering siRNAs. The protein is RNA silencing suppressor of Helenium virus S (HelVS).